A 299-amino-acid chain; its full sequence is 4-diphosphocytidyl-2-C-methyl-D-erythritol kinase (299 aa).

The active site involves K17. Residue 103-113 (PVASGIGGGSG) coordinates ATP. Residue D145 is part of the active site.

This sequence belongs to the GHMP kinase family. IspE subfamily.

The enzyme catalyses 4-CDP-2-C-methyl-D-erythritol + ATP = 4-CDP-2-C-methyl-D-erythritol 2-phosphate + ADP + H(+). The protein operates within isoprenoid biosynthesis; isopentenyl diphosphate biosynthesis via DXP pathway; isopentenyl diphosphate from 1-deoxy-D-xylulose 5-phosphate: step 3/6. Its function is as follows. Catalyzes the phosphorylation of the position 2 hydroxy group of 4-diphosphocytidyl-2C-methyl-D-erythritol. The chain is 4-diphosphocytidyl-2-C-methyl-D-erythritol kinase from Bartonella tribocorum (strain CIP 105476 / IBS 506).